The primary structure comprises 201 residues: Homeobox protein goosecoid-2 (201 aa).

Disordered stretches follow at residues 1 to 55 (MATA…PEAP), 95 to 124 (PATP…RRTR), and 179 to 201 (RHQK…KESC). Over residues 95 to 106 (PATPSPLTAPRA) the composition is skewed to low complexity. Positions 123–182 (TRRHRTIFSEEQLQALEALFVQNQYPDVGTRERLAVRIRLREERVEVWFKNRRAKWRHQK) form a DNA-binding region, homeobox.

The protein belongs to the paired homeobox family. Bicoid subfamily. As to expression, expressed in adult testis.

The protein localises to the nucleus. Functionally, may have a role in development. May regulate its own transcription. May bind the bicoid consensus sequence TAATCC. In Mus musculus (Mouse), this protein is Homeobox protein goosecoid-2 (Gsc2).